A 1088-amino-acid chain; its full sequence is Tyrocidine synthase 1 (1088 aa).

A Carrier domain is found at 528-602 (PPRTETESIL…QVALFVKSTT (75 aa)). Serine 563 carries the post-translational modification O-(pantetheine 4'-phosphoryl)serine.

Belongs to the ATP-dependent AMP-binding enzyme family. Large multienzyme complex of TycA, TycB and TycC. Requires pantetheine 4'-phosphate as cofactor.

The enzyme catalyses L-phenylalanine + ATP + H2O = D-phenylalanine + AMP + diphosphate + H(+). Its pathway is antibiotic biosynthesis; tyrocidine biosynthesis. Its function is as follows. In the first step of peptide synthesis this enzyme activates phenylalanine and racemizes it to the D-isomer. The chain is Tyrocidine synthase 1 (tycA) from Brevibacillus parabrevis.